Here is a 710-residue protein sequence, read N- to C-terminus: Subtilisin-like protease SBT4.8 (710 aa).

Residues 1 to 23 (MVKRASFCLLSCLIILFLSSVSA) form the signal peptide. Residues 24 to 111 (IIYDPQDKQV…VFRSKNYKLQ (88 aa)) constitute a propeptide, activation peptide. One can recognise an Inhibitor I9 domain in the interval 33 to 110 (VYVVYMGSLP…SVFRSKNYKL (78 aa)). In terms of domain architecture, Peptidase S8 spans 115-559 (SWDFMGMKEG…AGHVDPIAAI (445 aa)). The active-site Charge relay system is Asp-143. A glycan (N-linked (GlcNAc...) asparagine) is linked at Asn-174. His-198 functions as the Charge relay system in the catalytic mechanism. N-linked (GlcNAc...) asparagine glycosylation is found at Asn-221, Asn-364, and Asn-419. The region spanning 354-414 (KYPLEYGDYL…VLSQDDFDSL (61 aa)) is the PA domain. Ser-498 acts as the Charge relay system in catalysis. Asn-535, Asn-568, Asn-580, Asn-618, and Asn-636 each carry an N-linked (GlcNAc...) asparagine glycan.

This sequence belongs to the peptidase S8 family. In terms of processing, the C-terminal propeptide is autocleaved.

It localises to the secreted. The chain is Subtilisin-like protease SBT4.8 from Arabidopsis thaliana (Mouse-ear cress).